A 266-amino-acid polypeptide reads, in one-letter code: Undecaprenyl-diphosphatase (266 aa).

A run of 7 helical transmembrane segments spans residues 38 to 58 (SDMF…IIYW), 80 to 100 (LIVA…VLHF), 108 to 128 (PIAW…WAAA), 136 to 156 (ITWL…IFPG), 176 to 196 (AAAT…ASGY), 217 to 237 (IAFV…LAYI), and 245 to 265 (FAVY…TGLI).

Belongs to the UppP family.

It localises to the cell inner membrane. The catalysed reaction is di-trans,octa-cis-undecaprenyl diphosphate + H2O = di-trans,octa-cis-undecaprenyl phosphate + phosphate + H(+). Catalyzes the dephosphorylation of undecaprenyl diphosphate (UPP). Confers resistance to bacitracin. In Rhizobium leguminosarum bv. trifolii (strain WSM2304), this protein is Undecaprenyl-diphosphatase.